Here is a 349-residue protein sequence, read N- to C-terminus: Uroporphyrinogen decarboxylase (349 aa).

Substrate-binding positions include 23-27 (RQAGR), Asp-71, Tyr-148, Ser-203, and His-317.

Belongs to the uroporphyrinogen decarboxylase family. As to quaternary structure, homodimer.

It is found in the cytoplasm. The catalysed reaction is uroporphyrinogen III + 4 H(+) = coproporphyrinogen III + 4 CO2. Its pathway is porphyrin-containing compound metabolism; protoporphyrin-IX biosynthesis; coproporphyrinogen-III from 5-aminolevulinate: step 4/4. Functionally, catalyzes the decarboxylation of four acetate groups of uroporphyrinogen-III to yield coproporphyrinogen-III. In Sorangium cellulosum (strain So ce56) (Polyangium cellulosum (strain So ce56)), this protein is Uroporphyrinogen decarboxylase.